The primary structure comprises 341 residues: uncharacterized protein (341 aa).

4 helical membrane passes run 8-28, 63-83, 171-191, and 317-337; these read LMLT…PLII, LMYF…VFAL, IYIM…IALS, and EFLV…KIFL. The VWFA domain maps to 101-305; it reads DIVIVLDISP…SKKENLERKI (205 aa).

Its subcellular location is the cell membrane. This is an uncharacterized protein from Borreliella burgdorferi (strain ATCC 35210 / DSM 4680 / CIP 102532 / B31) (Borrelia burgdorferi).